Reading from the N-terminus, the 304-residue chain is Nucleotide-binding protein SH2124 (304 aa).

ATP is bound at residue 19–26 (GLSGAGKS). 70 to 73 (DLRG) provides a ligand contact to GTP.

It belongs to the RapZ-like family.

Displays ATPase and GTPase activities. The chain is Nucleotide-binding protein SH2124 from Staphylococcus haemolyticus (strain JCSC1435).